A 793-amino-acid chain; its full sequence is PC3-like endoprotease variant A (793 aa).

The N-terminal stretch at 1–29 is a signal peptide; that stretch reads MNYRGIYRRRYVFVLLLLVAVVNISYGWT. Positions 30-152 are excised as a propeptide; that stretch reads VLKNKDYKRR…QQKILERVKR (123 aa). Residues asparagine 62 and asparagine 190 are each glycosylated (N-linked (GlcNAc...) asparagine). One can recognise a Peptidase S8 domain in the interval 164 to 486; the sequence is MWYLLNTGQA…FGRLDANAMV (323 aa). Active-site charge relay system residues include aspartate 202 and histidine 242. Disulfide bonds link cysteine 259–cysteine 411 and cysteine 351–cysteine 381. Residue serine 419 is the Charge relay system of the active site. Residues 495-638 form the P/Homo B domain; sequence LPAQRKCTAA…EERVIDTQTK (144 aa). Cysteine 501 and cysteine 527 are oxidised to a cystine.

It belongs to the peptidase S8 family. Furin subfamily. As to expression, predominantly in the body column.

In terms of biological role, probably involved in the processing of hormone and other protein precursors at sites comprised of pairs of basic amino acid residues. This Hydra vulgaris (Hydra) protein is PC3-like endoprotease variant A.